A 214-amino-acid polypeptide reads, in one-letter code: Ribonuclease P protein component 3 (214 aa).

The protein belongs to the eukaryotic/archaeal RNase P protein component 3 family. Consists of a catalytic RNA component and at least 4-5 protein subunits.

Its subcellular location is the cytoplasm. The catalysed reaction is Endonucleolytic cleavage of RNA, removing 5'-extranucleotides from tRNA precursor.. Part of ribonuclease P, a protein complex that generates mature tRNA molecules by cleaving their 5'-ends. The protein is Ribonuclease P protein component 3 of Thermococcus gammatolerans (strain DSM 15229 / JCM 11827 / EJ3).